Reading from the N-terminus, the 674-residue chain is Ribosome biogenesis protein BOP1 homolog (674 aa).

The segment at 1–28 is disordered; the sequence is MASTSAATPLKNKRKFENGKKKPKTLKD. Basic and acidic residues predominate over residues 15–28; sequence KFENGKKKPKTLKD. WD repeat units follow at residues 342-384, 386-425, 427-458, 459-500, 503-541, 587-626, and 643-674; these read GHTG…KTFQ, DGEVTSVSFSPVADRTLLAVAYEGKYVAILNTGCGDRLHV, QTEALLAETPTDAQEDGAVVTWRKSKEKLMLK, MPNE…SQCP, KRKGHVQAVTFHPTQARLFVATKIHVREYDLARCVLVKK, HHTAAVRSVAYHKKYPLLATVSDDGTAMVYYARIYTDFVK, and PNDLCMLHTTWHPTQPWLITAGADGTIALFTY.

Belongs to the WD repeat BOP1/ERB1 family.

The protein resides in the nucleus. The protein localises to the nucleolus. Its subcellular location is the nucleoplasm. Its function is as follows. Required for maturation of ribosomal RNAs and formation of the large ribosomal subunit. The chain is Ribosome biogenesis protein BOP1 homolog from Caenorhabditis elegans.